The sequence spans 422 residues: Histidinol dehydrogenase (422 aa).

NAD(+) is bound by residues Tyr-123, Gln-183, and Asn-206. 3 residues coordinate substrate: Ser-229, Gln-251, and His-254. Positions 251 and 254 each coordinate Zn(2+). Residues Glu-320 and His-321 each act as proton acceptor in the active site. Residues His-321, Asp-354, Glu-408, and His-413 each coordinate substrate. Asp-354 lines the Zn(2+) pocket. His-413 contributes to the Zn(2+) binding site.

This sequence belongs to the histidinol dehydrogenase family. Requires Zn(2+) as cofactor.

The catalysed reaction is L-histidinol + 2 NAD(+) + H2O = L-histidine + 2 NADH + 3 H(+). Its pathway is amino-acid biosynthesis; L-histidine biosynthesis; L-histidine from 5-phospho-alpha-D-ribose 1-diphosphate: step 9/9. Its function is as follows. Catalyzes the sequential NAD-dependent oxidations of L-histidinol to L-histidinaldehyde and then to L-histidine. The polypeptide is Histidinol dehydrogenase (Natronomonas pharaonis (strain ATCC 35678 / DSM 2160 / CIP 103997 / JCM 8858 / NBRC 14720 / NCIMB 2260 / Gabara) (Halobacterium pharaonis)).